Consider the following 91-residue polypeptide: UPF0335 protein BBta_6866 (91 aa).

The protein belongs to the UPF0335 family.

This Bradyrhizobium sp. (strain BTAi1 / ATCC BAA-1182) protein is UPF0335 protein BBta_6866.